A 296-amino-acid polypeptide reads, in one-letter code: MKHLDSLEAESIHILRETAAQFRKPVLMYSIGKDSSVLLHLARKAFYPSRPPFPFLHIDTTWKFHEMIAFRDKRVAEEGVDLIVHTNRAGVEAGVSPFTHGAAYTDIMKTQALREALTQGGFDGVIGGARRDEEKSRAKERVFSFRDAHHRWDPKNQRPELWNTYNGRVGKGESVRVFPLSNWTELDIWLYILRESIPVVPLYLAKPRPVVERDGALIMVDDNRLPLEPGETPQTRWVRFRTLGCYPLTGAIESRAASLPEIIAEMLVARTSERQGRLIDQDQAASMEMKKQEGYF.

The protein belongs to the PAPS reductase family. CysD subfamily. As to quaternary structure, heterodimer composed of CysD, the smaller subunit, and CysN.

The catalysed reaction is sulfate + ATP + H(+) = adenosine 5'-phosphosulfate + diphosphate. It participates in sulfur metabolism; hydrogen sulfide biosynthesis; sulfite from sulfate: step 1/3. Functionally, with CysN forms the ATP sulfurylase (ATPS) that catalyzes the adenylation of sulfate producing adenosine 5'-phosphosulfate (APS) and diphosphate, the first enzymatic step in sulfur assimilation pathway. APS synthesis involves the formation of a high-energy phosphoric-sulfuric acid anhydride bond driven by GTP hydrolysis by CysN coupled to ATP hydrolysis by CysD. The polypeptide is Sulfate adenylyltransferase subunit 2 (Rhodospirillum rubrum (strain ATCC 11170 / ATH 1.1.1 / DSM 467 / LMG 4362 / NCIMB 8255 / S1)).